We begin with the raw amino-acid sequence, 187 residues long: Putative manganese efflux pump MntP (187 aa).

The next 6 membrane-spanning stretches (helical) occupy residues 3 to 23 (FYSL…VSLC), 35 to 55 (HYLI…TIGY), 56 to 76 (FIGI…AFIL), 107 to 127 (LALA…FAFL), 129 to 149 (VNLL…CIIA), and 166 to 186 (LLGG…HLFF).

Belongs to the MntP (TC 9.B.29) family.

Its subcellular location is the cell inner membrane. Functionally, probably functions as a manganese efflux pump. In Campylobacter jejuni subsp. doylei (strain ATCC BAA-1458 / RM4099 / 269.97), this protein is Putative manganese efflux pump MntP.